We begin with the raw amino-acid sequence, 441 residues long: Acetyltransferase TRI7 (441 aa).

7 helical membrane passes run 14-34 (GILY…LIII), 75-95 (SLTL…LVLT), 158-178 (IWFI…LDII), 306-326 (IAFV…FCWG), 336-356 (LAFF…QALC), 377-397 (LVGY…YLYH), and 421-441 (TATM…GIEV).

The protein belongs to the wax synthase family.

It localises to the membrane. It functions in the pathway sesquiterpene biosynthesis; trichothecene biosynthesis. In terms of biological role, acetyltransferase; part of the core gene cluster that mediates the biosynthesis of trichothecenes, a very large family of chemically related bicyclic sesquiterpene compounds acting as mycotoxins, including T2-toxin. The biosynthesis of trichothecenes begins with the cyclization of farnesyl diphosphate to trichodiene and is catalyzed by the trichodiene synthase TRI5. Trichodiene undergoes a series of oxygenations catalyzed by the cytochrome P450 monooxygenase TRI4. TRI4 controls the addition of four oxygens at C-2, C-3, C-11, and the C-12, C-13-epoxide to form the intermediate isotrichotriol. Isotrichotriol then undergoes a non-enzymatic isomerization and cyclization to form isotrichodermol. During this process, the oxygen at the C-2 position becomes the pyran ring oxygen and the hydroxyl group at C-11 is lost. More complex type A trichothecenes are built by modifying isotrichodermol through a series of paired hydroxylation and acetylation or acylation steps. Isotrichodermol is converted to isotrichodermin by the acetyltransferase TRI101. TRI101 encodes a C-3 transacetylase that acts as a self-protection or resistance factor during biosynthesis and that the presence of a free C-3 hydroxyl group is a key component of Fusarium trichothecene phytotoxicity. A second hydroxyl group is added to C-15 by the trichothecene C-15 hydroxylase TRI11, producing 15-decalonectrin, which is then acetylated by TRI3, producing calonectrin. A third hydroxyl group is added at C-4 by the cytochrome P450 monooxygenase TRI13, converting calonectrin to 3,15-diacetoxyspirpenol, which is subsequently acetylated by the acetyltransferase TRI7. A fourth hydroxyl group is added to C-8 by the cytochrome P450 monooxygenase TRI1, followed by the addition of an isovaleryl moiety by TRI16. Finally, the acetyl group is removed from the C-3 position by the trichothecene C-3 esterase TRI8 to produce T-2 toxin. The polypeptide is Acetyltransferase TRI7 (Fusarium sporotrichioides).